The chain runs to 565 residues: Urocanate hydratase (565 aa).

Residues G58 to G59, Q136, G182 to G184, E202, R207, N245 to A246, Q266 to H270, Y276 to L277, and Y325 contribute to the NAD(+) site. C413 is an active-site residue. G495 lines the NAD(+) pocket.

This sequence belongs to the urocanase family. Requires NAD(+) as cofactor.

It is found in the cytoplasm. It carries out the reaction 4-imidazolone-5-propanoate = trans-urocanate + H2O. It functions in the pathway amino-acid degradation; L-histidine degradation into L-glutamate; N-formimidoyl-L-glutamate from L-histidine: step 2/3. In terms of biological role, catalyzes the conversion of urocanate to 4-imidazolone-5-propionate. In Vibrio cholerae serotype O1 (strain ATCC 39541 / Classical Ogawa 395 / O395), this protein is Urocanate hydratase.